A 187-amino-acid polypeptide reads, in one-letter code: MKITEPIIKEAQEKMTKAEDSLRRELGNIRAGRANASLLNRINVEYYGAPTPLNQMAQISVPEARVLLVTPYDKTSLKNIEHAIMASDLGIAPMNDGTAIRLVIPQLTEERRKELAKQVKAVSETGKVAVRNIRRDMMDALKKAQKNGDLTEDDLRDLENQAQKVTDESIKNIDKITEDKEKEVLEG.

It belongs to the RRF family.

It is found in the cytoplasm. Functionally, responsible for the release of ribosomes from messenger RNA at the termination of protein biosynthesis. May increase the efficiency of translation by recycling ribosomes from one round of translation to another. This is Ribosome-recycling factor from Ligilactobacillus salivarius (strain UCC118) (Lactobacillus salivarius).